The sequence spans 588 residues: Arginine--tRNA ligase (588 aa).

A 'HIGH' region motif is present at residues 126-136 (PNIAKEMHVGH).

Belongs to the class-I aminoacyl-tRNA synthetase family. Monomer.

It is found in the cytoplasm. It carries out the reaction tRNA(Arg) + L-arginine + ATP = L-arginyl-tRNA(Arg) + AMP + diphosphate. The protein is Arginine--tRNA ligase of Nostoc sp. (strain PCC 7120 / SAG 25.82 / UTEX 2576).